A 435-amino-acid chain; its full sequence is Cytochrome c biogenesis protein CcsB (435 aa).

The next 3 membrane-spanning stretches (helical) occupy residues 14–34, 72–92, and 162–182; these read LRLA…GTIL, SVWF…CSWR, and VGPL…AWGA.

Belongs to the Ccs1/CcsB family. In terms of assembly, may interact with CcsA.

It is found in the cellular thylakoid membrane. Its function is as follows. Required during biogenesis of c-type cytochromes (cytochrome c6 and cytochrome f) at the step of heme attachment. The sequence is that of Cytochrome c biogenesis protein CcsB from Synechococcus sp. (strain CC9311).